The following is a 249-amino-acid chain: Large ribosomal subunit protein uL30A (249 aa).

The protein belongs to the universal ribosomal protein uL30 family. In terms of assembly, component of the small ribosomal subunit (SSU). Mature yeast ribosomes consist of a small (40S) and a large (60S) subunit. The 40S small subunit contains 1 molecule of ribosomal RNA (18S rRNA) and at least 33 different proteins. The large 60S subunit contains 3 rRNA molecules (25S, 5.8S and 5S rRNA) and at least 46 different proteins.

The protein resides in the cytoplasm. The protein localises to the nucleus. It is found in the nucleolus. Component of the ribosome, a large ribonucleoprotein complex responsible for the synthesis of proteins in the cell. The small ribosomal subunit (SSU) binds messenger RNAs (mRNAs) and translates the encoded message by selecting cognate aminoacyl-transfer RNA (tRNA) molecules. The large subunit (LSU) contains the ribosomal catalytic site termed the peptidyl transferase center (PTC), which catalyzes the formation of peptide bonds, thereby polymerizing the amino acids delivered by tRNAs into a polypeptide chain. The nascent polypeptides leave the ribosome through a tunnel in the LSU and interact with protein factors that function in enzymatic processing, targeting, and the membrane insertion of nascent chains at the exit of the ribosomal tunnel. In Schizosaccharomyces pombe (strain 972 / ATCC 24843) (Fission yeast), this protein is Large ribosomal subunit protein uL30A (rlp7).